The primary structure comprises 575 residues: Sodium/calcium exchanger NCL2 (575 aa).

Helical transmembrane passes span 69–89 (FLPC…YGFL), 112–132 (IVGG…LILV), and 146–166 (VLIG…LLWG). An N-linked (GlcNAc...) asparagine glycan is attached at Asn179. 2 helical membrane passes run 210 to 230 (IMAI…FKLH) and 237 to 257 (VLIG…YQVF). 2 consecutive EF-hand domains span residues 297–332 (PNVS…INFE) and 337–372 (NSNL…WLDE). N-linked (GlcNAc...) asparagine glycosylation is present at Asn298. Positions 310, 312, 314, 316, 321, 350, 352, 354, and 361 each coordinate Ca(2+). 5 helical membrane passes run 417–437 (WTCI…AASA), 457–477 (FISF…SAII), 494–514 (VYGG…ALVY), 522–542 (FSSE…FTSF), and 548–568 (LWTC…VYIL).

The protein belongs to the Ca(2+):cation antiporter (CaCA) (TC 2.A.19) family.

The protein localises to the cell membrane. In terms of biological role, may function as a sodium/calcium exchanger (NCX) and participate in the maintenance of calcium homeostasis. May play a role abiotic stress responses. This Oryza sativa subsp. japonica (Rice) protein is Sodium/calcium exchanger NCL2.